The primary structure comprises 361 residues: Mitogen-activated protein kinase 14 (361 aa).

In terms of domain architecture, Protein kinase spans 25 to 309 (YQNLTPVGSG…AAEALAHSYF (285 aa)). ATP-binding positions include 31 to 39 (VGSGAYGSV) and Lys-54. Residue Asp-151 is the Proton acceptor of the active site. Thr-181 bears the Phosphothreonine mark. The short motif at 181-183 (TGY) is the TXY element. At Tyr-183 the chain carries Phosphotyrosine.

The protein belongs to the protein kinase superfamily. CMGC Ser/Thr protein kinase family. MAP kinase subfamily. Mg(2+) is required as a cofactor. Post-translationally, dually phosphorylated on Thr-181 and Tyr-183, which activates the enzyme.

The enzyme catalyses L-seryl-[protein] + ATP = O-phospho-L-seryl-[protein] + ADP + H(+). The catalysed reaction is L-threonyl-[protein] + ATP = O-phospho-L-threonyl-[protein] + ADP + H(+). With respect to regulation, activated by tyrosine and threonine phosphorylation. Serine/threonine kinase which acts as an essential component of the MAP kinase signal transduction pathway. mapk14a is one of the four p38 MAPKs which play an important role in the cascades of cellular responses evoked by extracellular stimuli such as pro-inflammatory cytokines or physical stress leading to direct activation of transcription factors. Accordingly, p38 MAPKs phosphorylate a broad range of proteins and it has been estimated that they may have approximately 200 to 300 substrates each. Some of the targets are downstream kinases which are activated through phosphorylation and further phosphorylate additional targets. MPK2 is activated by upstream MAPKK/MAPKKK and stimulates MAPKAP kinase 2 to phosphorylate small heat shock proteins. Does not phosphorylate myelin basic protein or MAPKAP kinase 1. The sequence is that of Mitogen-activated protein kinase 14 (mapk14) from Xenopus laevis (African clawed frog).